A 350-amino-acid chain; its full sequence is Protein O-mannose kinase (350 aa).

Met1 bears the N-acetylmethionine mark. The Cytoplasmic portion of the chain corresponds to 1–20 (MEKQPQNKRRGLAPREVPPA). The helical; Signal-anchor for type II membrane protein transmembrane segment at 21–43 (VGLLLIMALMNTLLYLCLDHFFI) threads the bilayer. Residues 44–350 (APRQSIVDPR…AVMSQAREML (307 aa)) lie on the Lumenal side of the membrane. A Protein kinase domain is found at 81 to 350 (VRQLKRVGEG…AVMSQAREML (270 aa)). Asn165, Asn220, and Asn235 each carry an N-linked (GlcNAc...) asparagine glycan.

The protein belongs to the protein kinase superfamily. Ser/Thr protein kinase family. STKL subfamily.

It is found in the endoplasmic reticulum membrane. It catalyses the reaction 3-O-[beta-D-GalNAc-(1-&gt;3)-beta-D-GlcNAc-(1-&gt;4)-alpha-D-Man]-L-Thr-[protein] + ATP = 3-O-[beta-D-GalNAc-(1-&gt;3)-beta-D-GlcNAc-(1-&gt;4)-(O-6-P-alpha-D-Man)]-Thr-[protein] + ADP + H(+). Functionally, protein O-mannose kinase that specifically mediates phosphorylation at the 6-position of an O-mannose of the trisaccharide (N-acetylgalactosamine (GalNAc)-beta-1,3-N-acetylglucosamine (GlcNAc)-beta-1,4-mannose) to generate phosphorylated O-mannosyl trisaccharide (N-acetylgalactosamine-beta-1,3-N-acetylglucosamine-beta-1,4-(phosphate-6-)mannose). Phosphorylated O-mannosyl trisaccharide is a carbohydrate structure present in alpha-dystroglycan (DAG1), which is required for binding laminin G-like domain-containing extracellular proteins with high affinity. Only shows kinase activity when the GalNAc-beta-3-GlcNAc-beta-terminus is linked to the 4-position of O-mannose, suggesting that this disaccharide serves as the substrate recognition motif. The protein is Protein O-mannose kinase (POMK) of Macaca fascicularis (Crab-eating macaque).